A 255-amino-acid chain; its full sequence is Superoxide dismutase [Fe] 2, chloroplastic (255 aa).

The transit peptide at 1-32 (MAAFASALRVLPSPPAAVPRRLRSREQRQGCR) directs the protein to the chloroplast. His-67, His-119, Asp-203, and His-207 together coordinate Fe cation.

It belongs to the iron/manganese superoxide dismutase family. In terms of assembly, homodimer. Requires Fe cation as cofactor. Strongly expressed in the stems of the young seedlings, etiolated seedlings and embryogenic calli, but only minimally expressed in the leaves and the roots.

The protein localises to the plastid. Its subcellular location is the chloroplast. The catalysed reaction is 2 superoxide + 2 H(+) = H2O2 + O2. Destroys superoxide anion radicals which are normally produced within the cells and which are toxic to biological systems. This chain is Superoxide dismutase [Fe] 2, chloroplastic, found in Oryza sativa subsp. japonica (Rice).